We begin with the raw amino-acid sequence, 419 residues long: UDP-N-acetylglucosamine 1-carboxyvinyltransferase (419 aa).

Residue 22-23 coordinates phosphoenolpyruvate; it reads KN. Arginine 91 lines the UDP-N-acetyl-alpha-D-glucosamine pocket. Cysteine 115 serves as the catalytic Proton donor. At cysteine 115 the chain carries 2-(S-cysteinyl)pyruvic acid O-phosphothioketal. UDP-N-acetyl-alpha-D-glucosamine-binding positions include 120–124, 160–163, aspartate 305, and valine 327; these read RPVDL and KVSV.

Belongs to the EPSP synthase family. MurA subfamily.

The protein resides in the cytoplasm. The catalysed reaction is phosphoenolpyruvate + UDP-N-acetyl-alpha-D-glucosamine = UDP-N-acetyl-3-O-(1-carboxyvinyl)-alpha-D-glucosamine + phosphate. Its pathway is cell wall biogenesis; peptidoglycan biosynthesis. Its function is as follows. Cell wall formation. Adds enolpyruvyl to UDP-N-acetylglucosamine. In Salmonella gallinarum (strain 287/91 / NCTC 13346), this protein is UDP-N-acetylglucosamine 1-carboxyvinyltransferase.